A 127-amino-acid polypeptide reads, in one-letter code: Aspartate 1-decarboxylase (127 aa).

S25 functions as the Schiff-base intermediate with substrate; via pyruvic acid in the catalytic mechanism. S25 is subject to Pyruvic acid (Ser). A substrate-binding site is contributed by T57. Y58 functions as the Proton donor in the catalytic mechanism. 73–75 provides a ligand contact to substrate; it reads GAA.

Belongs to the PanD family. In terms of assembly, heterooctamer of four alpha and four beta subunits. Pyruvate is required as a cofactor. Post-translationally, is synthesized initially as an inactive proenzyme, which is activated by self-cleavage at a specific serine bond to produce a beta-subunit with a hydroxyl group at its C-terminus and an alpha-subunit with a pyruvoyl group at its N-terminus.

The protein localises to the cytoplasm. The catalysed reaction is L-aspartate + H(+) = beta-alanine + CO2. Its pathway is cofactor biosynthesis; (R)-pantothenate biosynthesis; beta-alanine from L-aspartate: step 1/1. Functionally, catalyzes the pyruvoyl-dependent decarboxylation of aspartate to produce beta-alanine. This Listeria monocytogenes serotype 4b (strain CLIP80459) protein is Aspartate 1-decarboxylase.